The sequence spans 333 residues: Ornithine carbamoyltransferase (333 aa).

Carbamoyl phosphate contacts are provided by residues 56–59 (STRT), Gln-83, Arg-107, and 134–137 (HPTQ). L-ornithine-binding positions include Asn-167, Asp-231, and 235-236 (SM). Carbamoyl phosphate contacts are provided by residues 273–274 (CL) and Arg-318.

The protein belongs to the aspartate/ornithine carbamoyltransferase superfamily. OTCase family.

The protein localises to the cytoplasm. The enzyme catalyses carbamoyl phosphate + L-ornithine = L-citrulline + phosphate + H(+). It participates in amino-acid biosynthesis; L-arginine biosynthesis; L-arginine from L-ornithine and carbamoyl phosphate: step 1/3. Functionally, reversibly catalyzes the transfer of the carbamoyl group from carbamoyl phosphate (CP) to the N(epsilon) atom of ornithine (ORN) to produce L-citrulline. The polypeptide is Ornithine carbamoyltransferase (argF) (Staphylococcus aureus (strain Mu50 / ATCC 700699)).